Here is a 190-residue protein sequence, read N- to C-terminus: uncharacterized protein (190 aa).

One can recognise a Macro domain in the interval 1 to 185 (MITMFKIVRG…LALETIGLGD (185 aa)).

This is an uncharacterized protein from Pyrococcus horikoshii (strain ATCC 700860 / DSM 12428 / JCM 9974 / NBRC 100139 / OT-3).